A 379-amino-acid polypeptide reads, in one-letter code: Carboxypeptidase Y-deficient protein 8 (379 aa).

Low complexity predominate over residues histidine 84–valine 107. Residues histidine 84–aspartate 108 form a disordered region. Position 216 is a phosphoserine (serine 216).

This sequence belongs to the VPS26 family. As to quaternary structure, component of the retromer complex which consists of VPS29, VPS26, VPS35, VPS5 and VPS17. Component of a retromer subcomplex consisting of VPS29, VPS26 and VPS35.

Its function is as follows. Plays a role in vesicular protein sorting. Required for the endosome-to-Golgi retrieval of the vacuolar protein sorting receptor VPS10. Component of the membrane-associated retromer complex which is essential in endosome-to-Golgi retrograde transport. The VPS29-VPS26-VPS35 subcomplex may be involved in cargo selection. This is Carboxypeptidase Y-deficient protein 8 (PEP8) from Saccharomyces cerevisiae (strain ATCC 204508 / S288c) (Baker's yeast).